We begin with the raw amino-acid sequence, 304 residues long: dTDP-4-dehydrorhamnose reductase (304 aa).

Residues 15–17 (GQL), 41–42 (DI), and 63–65 (AYT) each bind NADH. Residues 16–17 (QL), 41–42 (DI), and 63–65 (AYT) each bind NADPH. 104-105 (TD) provides a ligand contact to dTDP-beta-L-rhamnose. NADH contacts are provided by Y132 and K136. Residues Y132 and K136 each contribute to the NADPH site. Y132 (proton donor/acceptor) is an active-site residue. W157 is a dTDP-beta-L-rhamnose binding site.

It belongs to the dTDP-4-dehydrorhamnose reductase family. The cofactor is Mg(2+).

It carries out the reaction dTDP-beta-L-rhamnose + NADP(+) = dTDP-4-dehydro-beta-L-rhamnose + NADPH + H(+). It functions in the pathway carbohydrate biosynthesis; dTDP-L-rhamnose biosynthesis. Functionally, involved in the biosynthesis of the dTDP-L-rhamnose which is a component of the critical linker, D-N-acetylglucosamine-L-rhamnose disaccharide, which connects the galactan region of arabinogalactan to peptidoglycan via a phosphodiester linkage. Catalyzes the reduction of dTDP-6-deoxy-L-lyxo-4-hexulose to yield dTDP-L-rhamnose. The polypeptide is dTDP-4-dehydrorhamnose reductase (Mycobacterium tuberculosis (strain CDC 1551 / Oshkosh)).